Consider the following 271-residue polypeptide: Acetyl-coenzyme A carboxylase carboxyl transferase subunit alpha (271 aa).

Positions 1-247 (MSRELIRTAD…KKTILEALGE (247 aa)) constitute a CoA carboxyltransferase C-terminal domain.

This sequence belongs to the AccA family. As to quaternary structure, acetyl-CoA carboxylase is a heterohexamer composed of biotin carboxyl carrier protein (AccB), biotin carboxylase (AccC) and two subunits each of ACCase subunit alpha (AccA) and ACCase subunit beta (AccD).

The protein localises to the cytoplasm. The catalysed reaction is N(6)-carboxybiotinyl-L-lysyl-[protein] + acetyl-CoA = N(6)-biotinyl-L-lysyl-[protein] + malonyl-CoA. Its pathway is lipid metabolism; malonyl-CoA biosynthesis; malonyl-CoA from acetyl-CoA: step 1/1. Functionally, component of the acetyl coenzyme A carboxylase (ACC) complex. First, biotin carboxylase catalyzes the carboxylation of biotin on its carrier protein (BCCP) and then the CO(2) group is transferred by the carboxyltransferase to acetyl-CoA to form malonyl-CoA. This chain is Acetyl-coenzyme A carboxylase carboxyl transferase subunit alpha, found in Clostridium perfringens (strain ATCC 13124 / DSM 756 / JCM 1290 / NCIMB 6125 / NCTC 8237 / Type A).